A 289-amino-acid chain; its full sequence is Phosphatidylserine decarboxylase proenzyme (289 aa).

Catalysis depends on charge relay system; for autoendoproteolytic cleavage activity residues Asp89, His146, and Ser252. The active-site Schiff-base intermediate with substrate; via pyruvic acid; for decarboxylase activity is the Ser252. A Pyruvic acid (Ser); by autocatalysis modification is found at Ser252.

It belongs to the phosphatidylserine decarboxylase family. PSD-B subfamily. Prokaryotic type I sub-subfamily. As to quaternary structure, heterodimer of a large membrane-associated beta subunit and a small pyruvoyl-containing alpha subunit. The cofactor is pyruvate. Is synthesized initially as an inactive proenzyme. Formation of the active enzyme involves a self-maturation process in which the active site pyruvoyl group is generated from an internal serine residue via an autocatalytic post-translational modification. Two non-identical subunits are generated from the proenzyme in this reaction, and the pyruvate is formed at the N-terminus of the alpha chain, which is derived from the carboxyl end of the proenzyme. The autoendoproteolytic cleavage occurs by a canonical serine protease mechanism, in which the side chain hydroxyl group of the serine supplies its oxygen atom to form the C-terminus of the beta chain, while the remainder of the serine residue undergoes an oxidative deamination to produce ammonia and the pyruvoyl prosthetic group on the alpha chain. During this reaction, the Ser that is part of the protease active site of the proenzyme becomes the pyruvoyl prosthetic group, which constitutes an essential element of the active site of the mature decarboxylase.

It localises to the cell membrane. The enzyme catalyses a 1,2-diacyl-sn-glycero-3-phospho-L-serine + H(+) = a 1,2-diacyl-sn-glycero-3-phosphoethanolamine + CO2. The protein operates within phospholipid metabolism; phosphatidylethanolamine biosynthesis; phosphatidylethanolamine from CDP-diacylglycerol: step 2/2. Functionally, catalyzes the formation of phosphatidylethanolamine (PtdEtn) from phosphatidylserine (PtdSer). This chain is Phosphatidylserine decarboxylase proenzyme, found in Shewanella putrefaciens (strain CN-32 / ATCC BAA-453).